The sequence spans 427 residues: Probable threonylcarbamoyladenosine tRNA methylthiotransferase (427 aa).

An MTTase N-terminal domain is found at 12-118 (MRVYVEGYGC…AGEILKNYVE (107 aa)). The [4Fe-4S] cluster site is built by Cys-21, Cys-57, Cys-86, Cys-155, Cys-159, and Cys-162. One can recognise a Radical SAM core domain in the interval 141 to 370 (LKPSLITPLP…DKLRRELSYL (230 aa)). A TRAM domain is found at 373–427 (KKYIGKAMKVLVLDEGKGYTDNFKVVKFEGGEVGEFRKVKITDAKTFGLKGELIL).

The protein belongs to the methylthiotransferase family. CDKAL1 subfamily. [4Fe-4S] cluster serves as cofactor.

It catalyses the reaction N(6)-L-threonylcarbamoyladenosine(37) in tRNA + (sulfur carrier)-SH + AH2 + 2 S-adenosyl-L-methionine = 2-methylsulfanyl-N(6)-L-threonylcarbamoyladenosine(37) in tRNA + (sulfur carrier)-H + 5'-deoxyadenosine + L-methionine + A + S-adenosyl-L-homocysteine + 2 H(+). In terms of biological role, catalyzes the methylthiolation of N6-threonylcarbamoyladenosine (t(6)A), leading to the formation of 2-methylthio-N6-threonylcarbamoyladenosine (ms(2)t(6)A) at position 37 in tRNAs that read codons beginning with adenine. This Methanocaldococcus jannaschii (strain ATCC 43067 / DSM 2661 / JAL-1 / JCM 10045 / NBRC 100440) (Methanococcus jannaschii) protein is Probable threonylcarbamoyladenosine tRNA methylthiotransferase.